Consider the following 360-residue polypeptide: Pyrimidine monooxygenase RutA (360 aa).

FMN is bound by residues 49-50 (IK), asparagine 115, glutamate 124, 140-141 (RY), and serine 190.

Belongs to the NtaA/SnaA/DszA monooxygenase family. RutA subfamily.

The catalysed reaction is uracil + FMNH2 + NADH + O2 = (Z)-3-ureidoacrylate + FMN + NAD(+) + H2O + H(+). It catalyses the reaction thymine + FMNH2 + NADH + O2 = (Z)-2-methylureidoacrylate + FMN + NAD(+) + H2O + H(+). Catalyzes the pyrimidine ring opening between N-3 and C-4 by an unusual flavin hydroperoxide-catalyzed mechanism, adding oxygen atoms in the process to yield ureidoacrylate peracid, that immediately reacts with FMN forming ureidoacrylate and FMN-N(5)-oxide. The FMN-N(5)-oxide reacts spontaneously with NADH to produce FMN. Requires the flavin reductase RutF to regenerate FMN in vivo. The protein is Pyrimidine monooxygenase RutA of Bradyrhizobium sp. (strain BTAi1 / ATCC BAA-1182).